The following is a 196-amino-acid chain: GTP cyclohydrolase-2 (196 aa).

49-53 (RVHSE) provides a ligand contact to GTP. Zn(2+) is bound by residues Cys-54, Cys-65, and Cys-67. GTP-binding positions include Gln-70, 92-94 (EGR), and Thr-114. Asp-126 functions as the Proton acceptor in the catalytic mechanism. Arg-128 (nucleophile) is an active-site residue. GTP contacts are provided by Thr-149 and Lys-154.

The protein belongs to the GTP cyclohydrolase II family. In terms of assembly, homodimer. The cofactor is Zn(2+).

It carries out the reaction GTP + 4 H2O = 2,5-diamino-6-hydroxy-4-(5-phosphoribosylamino)-pyrimidine + formate + 2 phosphate + 3 H(+). It participates in cofactor biosynthesis; riboflavin biosynthesis; 5-amino-6-(D-ribitylamino)uracil from GTP: step 1/4. Catalyzes the conversion of GTP to 2,5-diamino-6-ribosylamino-4(3H)-pyrimidinone 5'-phosphate (DARP), formate and pyrophosphate. This Citrobacter koseri (strain ATCC BAA-895 / CDC 4225-83 / SGSC4696) protein is GTP cyclohydrolase-2.